A 216-amino-acid chain; its full sequence is Somatotropin (216 aa).

The first 25 residues, 1-25 (MAPGSWFSPLLIAVVTLGLPQEAAA), serve as a signal peptide directing secretion. Residue His45 participates in Zn(2+) binding. Cys78 and Cys189 form a disulfide bridge. Position 198 (Glu198) interacts with Zn(2+). Residues Cys206 and Cys214 are joined by a disulfide bond.

The protein belongs to the somatotropin/prolactin family.

The protein resides in the secreted. Its function is as follows. Growth hormone plays an important role in growth control. The protein is Somatotropin (GH) of Gallus gallus (Chicken).